A 464-amino-acid chain; its full sequence is Gamma-aminobutyric acid receptor subunit alpha-5 (464 aa).

The signal sequence occupies residues 1 to 25 (MDNGMLSRFIMTKTLLVFCISMTLS). The Extracellular portion of the chain corresponds to 26–260 (SHFGFSQMPT…FHLKRKIGYF (235 aa)). Asparagine 45 carries an N-linked (GlcNAc...) asparagine glycan. A 4-aminobutanoate-binding site is contributed by arginine 101. Asparagine 145 is a glycosylation site (N-linked (GlcNAc...) asparagine). 4-aminobutanoate is bound at residue threonine 164. Cysteines 173 and 187 form a disulfide. N-linked (GlcNAc...) asparagine glycosylation is found at asparagine 207 and asparagine 236. The next 3 membrane-spanning stretches (helical) occupy residues 261–281 (VIQT…SFWL), 287–308 (PART…ISAR), and 319–340 (AMDW…EFAT). The Cytoplasmic segment spans residues 341–429 (VNYFTKRGWA…TYNSISKIDK (89 aa)). Lysine 355 is covalently cross-linked (Glycyl lysine isopeptide (Lys-Gly) (interchain with G-Cter in ubiquitin)). The segment at 382 to 414 (KLTHPPNIPKEQLPGGTGNAVGTASIRASEEKT) is disordered. Residues 430 to 450 (MSRIVFPILFGTFNLVYWATY) form a helical membrane-spanning segment.

It belongs to the ligand-gated ion channel (TC 1.A.9) family. Gamma-aminobutyric acid receptor (TC 1.A.9.5) subfamily. GABRA5 sub-subfamily. Heteropentamer, formed by a combination of alpha (GABRA1-6), beta (GABRB1-3), gamma (GABRG1-3), delta (GABRD), epsilon (GABRE), rho (GABRR1-3), pi (GABRP) and theta (GABRQ) chains, each subunit exhibiting distinct physiological and pharmacological properties. In terms of tissue distribution, expressed in brain areas such as cerebral cortex, hippocampal formation and olfactory bulb granular layer.

The protein resides in the postsynaptic cell membrane. It is found in the cell membrane. The enzyme catalyses chloride(in) = chloride(out). With respect to regulation, allosterically potentiated by alphaxalone. Allosterically inhibited by pregnenolone sulfate. Inhibited by zinc and lanthanum. Alpha subunit of the heteropentameric ligand-gated chloride channel gated by gamma-aminobutyric acid (GABA), a major inhibitory neurotransmitter in the brain. GABA-gated chloride channels, also named GABA(A) receptors (GABAAR), consist of five subunits arranged around a central pore and contain GABA active binding site(s) located at the alpha and beta subunit interface(s). When activated by GABA, GABAARs selectively allow the flow of chloride anions across the cell membrane down their electrochemical gradient. GABAARs containing alpha-5/GABRA5 subunits are mainly extrasynaptic and contribute to the tonic GABAergic inhibition in the hippocampus. Extrasynaptic alpha-5-containing GABAARs in CA1 pyramidal neurons play a role in learning and memory processes. The protein is Gamma-aminobutyric acid receptor subunit alpha-5 of Rattus norvegicus (Rat).